The chain runs to 161 residues: Anther-specific protein LAT52 (161 aa).

The first 17 residues, 1 to 17 (MAKAIVLLSALCILALA), serve as a signal peptide directing secretion. Cystine bridges form between cysteine 35/cysteine 106, cysteine 38/cysteine 147, and cysteine 59/cysteine 94. Residue asparagine 61 is glycosylated (N-linked (GlcNAc...) asparagine).

Belongs to the Ole e I family. In terms of tissue distribution, expressed in anthers and pollen.

Its function is as follows. May play a role during germination or early tube growth. This chain is Anther-specific protein LAT52 (LAT52), found in Solanum lycopersicum (Tomato).